The following is a 901-amino-acid chain: Protein translocase subunit SecA (901 aa).

ATP-binding positions include Q87, 105–109 (GEGKT), and D512. The tract at residues 859–901 (HQDDDSAAAAALAAQTGERKVGRNDPCPCGSGKKYKQCHGRLQ) is disordered. Zn(2+) contacts are provided by C885, C887, C896, and H897. Basic residues predominate over residues 891-901 (KKYKQCHGRLQ).

Belongs to the SecA family. Monomer and homodimer. Part of the essential Sec protein translocation apparatus which comprises SecA, SecYEG and auxiliary proteins SecDF-YajC and YidC. The cofactor is Zn(2+).

It localises to the cell inner membrane. The protein localises to the cytoplasm. It carries out the reaction ATP + H2O + cellular proteinSide 1 = ADP + phosphate + cellular proteinSide 2.. Part of the Sec protein translocase complex. Interacts with the SecYEG preprotein conducting channel. Has a central role in coupling the hydrolysis of ATP to the transfer of proteins into and across the cell membrane, serving both as a receptor for the preprotein-SecB complex and as an ATP-driven molecular motor driving the stepwise translocation of polypeptide chains across the membrane. The polypeptide is Protein translocase subunit SecA (Escherichia coli O127:H6 (strain E2348/69 / EPEC)).